A 135-amino-acid polypeptide reads, in one-letter code: Histone H2B.4 (135 aa).

2 stretches are compositionally biased toward basic and acidic residues: residues 1 to 12 (MAPKAAEKKPVE) and 23 to 35 (EKKV…GGEK). The disordered stretch occupies residues 1 to 43 (MAPKAAEKKPVEKTPAVKKPKAEKKVPTSKEGGEKKGKKKSKK). Residues Lys-8 and Lys-24 each carry the N6-acetyllysine modification. Residue Lys-131 forms a Glycyl lysine isopeptide (Lys-Gly) (interchain with G-Cter in ubiquitin) linkage.

This sequence belongs to the histone H2B family. In terms of assembly, the nucleosome is a histone octamer containing two molecules each of H2A, H2B, H3 and H4 assembled in one H3-H4 heterotetramer and two H2A-H2B heterodimers. The octamer wraps approximately 147 bp of DNA. Can be acetylated to form H2BK6ac and H2BK33ac. In terms of processing, monoubiquitinated to form H2BK143ub1; may give a specific tag for epigenetic transcriptional activation. Expressed preferentially in meristematic tissues.

Its subcellular location is the nucleus. The protein localises to the chromosome. Its function is as follows. Core component of nucleosome. Nucleosomes wrap and compact DNA into chromatin, limiting DNA accessibility to the cellular machineries which require DNA as a template. Histones thereby play a central role in transcription regulation, DNA repair, DNA replication and chromosomal stability. DNA accessibility is regulated via a complex set of post-translational modifications of histones, also called histone code, and nucleosome remodeling. The chain is Histone H2B.4 (TH153) from Triticum aestivum (Wheat).